The primary structure comprises 141 residues: Large ribosomal subunit protein uL11 (141 aa).

It belongs to the universal ribosomal protein uL11 family. Part of the ribosomal stalk of the 50S ribosomal subunit. Interacts with L10 and the large rRNA to form the base of the stalk. L10 forms an elongated spine to which L12 dimers bind in a sequential fashion forming a multimeric L10(L12)X complex. In terms of processing, one or more lysine residues are methylated.

In terms of biological role, forms part of the ribosomal stalk which helps the ribosome interact with GTP-bound translation factors. In Streptococcus equi subsp. equi (strain 4047), this protein is Large ribosomal subunit protein uL11.